The following is a 455-amino-acid chain: Venom prothrombin activator trocarin-D (455 aa).

The first 20 residues, 1–20 (MAPQLLLCLILTFLWSLPEA), serve as a signal peptide directing secretion. A propeptide spanning residues 21 to 40 (ESNVFLKSKVANRFLQRTKR) is cleaved from the precursor. The Gla domain occupies 41–86 (SNSLFEEIRPGNIERECIEEKCSKEEAREVFEDNEKTETFWNVYVD). 4-carboxyglutamate is present on residues glutamate 46, glutamate 47, glutamate 54, glutamate 56, glutamate 59, glutamate 60, glutamate 65, glutamate 66, glutamate 69, glutamate 72, and glutamate 75. A disulfide bridge links cysteine 57 with cysteine 62. The region spanning 86 to 122 (DGDQCSSNPCHYRGTCKDGIGSYTCTCLPNYEGKNCE) is the EGF-like 1; calcium-binding domain. 11 cysteine pairs are disulfide-bonded: cysteine 90–cysteine 101, cysteine 95–cysteine 110, cysteine 112–cysteine 121, cysteine 129–cysteine 140, cysteine 136–cysteine 149, cysteine 151–cysteine 164, cysteine 172–cysteine 328, cysteine 216–cysteine 221, cysteine 236–cysteine 252, cysteine 376–cysteine 390, and cysteine 401–cysteine 429. An O-linked (Hex...) serine glycan is attached at serine 92. An EGF-like 2 domain is found at 129–164 (CRVDNGNCWHFCKRVQSETQCSCAESYRLGVDGHSC). A propeptide spans 182–209 (REASLPDFVQSQKATLLKKSDNPSPDIR) (activation peptide). Positions 210–453 (IVNGMDCKLG…FIPWIKKIMS (244 aa)) constitute a Peptidase S1 domain. The active-site Charge relay system is the histidine 251. Residue asparagine 254 is glycosylated (N-linked (GlcNAc...) asparagine). The Charge relay system role is filled by aspartate 308. Serine 405 functions as the Charge relay system in the catalytic mechanism.

It belongs to the peptidase S1 family. Snake venom subfamily. Heterodimer of a light chain and a heavy chain; disulfide-linked. Post-translationally, gamma-carboxyglutamate residues are formed by vitamin K dependent carboxylation. These residues are essential for the binding of calcium. In terms of processing, the O-linked saccharides at Ser-92 are a mixture of Xyl-Glc, and Glc along with smaller amounts of Xyl-GlcNAc, GlcNAc, Gal, GalNAc, Xyl-Gal, and Xyl-GalNAc, suggesting that the glycosyl transferases responsible for this modification are non-specific. The N-linked carbohydrate at Asn-254 (Asn-45 of the heavy chain) is a sialylated and diantennary oligosaccharide. As to expression, expressed by the venom gland.

Its subcellular location is the secreted. The catalysed reaction is Selective cleavage of Arg-|-Thr and then Arg-|-Ile bonds in prothrombin to form thrombin.. Its activity is regulated as follows. Activated by calcium and phospholipids. Functionally, snake prothrombin activator that attacks the hemostatic system of prey. This protein is functionally similar to blood coagulation factor Xa. Induces cyanosis and death in mice at 1 mg/kg body weight during blood clotting. This is Venom prothrombin activator trocarin-D from Tropidechis carinatus (Australian rough-scaled snake).